Here is a 2281-residue protein sequence, read N- to C-terminus: Protein Ycf2 (2281 aa).

1634 to 1641 (GSIGTGRS) provides a ligand contact to ATP.

It belongs to the Ycf2 family.

It localises to the plastid. It is found in the chloroplast stroma. Functionally, probable ATPase of unknown function. Its presence in a non-photosynthetic plant (Epifagus virginiana) and experiments in tobacco indicate that it has an essential function which is probably not related to photosynthesis. This is Protein Ycf2 from Buxus microphylla (Littleleaf boxwood).